The following is a 204-amino-acid chain: NADH-quinone oxidoreductase subunit C (204 aa).

This sequence belongs to the complex I 30 kDa subunit family. NDH-1 is composed of 14 different subunits. Subunits NuoB, C, D, E, F, and G constitute the peripheral sector of the complex.

The protein localises to the cell inner membrane. The enzyme catalyses a quinone + NADH + 5 H(+)(in) = a quinol + NAD(+) + 4 H(+)(out). NDH-1 shuttles electrons from NADH, via FMN and iron-sulfur (Fe-S) centers, to quinones in the respiratory chain. The immediate electron acceptor for the enzyme in this species is believed to be ubiquinone. Couples the redox reaction to proton translocation (for every two electrons transferred, four hydrogen ions are translocated across the cytoplasmic membrane), and thus conserves the redox energy in a proton gradient. This Polaromonas naphthalenivorans (strain CJ2) protein is NADH-quinone oxidoreductase subunit C.